A 258-amino-acid polypeptide reads, in one-letter code: Snake venom serine proteinase 5 (258 aa).

The N-terminal stretch at 1-18 is a signal peptide; that stretch reads MVLIRVLANLLILQLSYA. A propeptide spanning residues 19–24 is cleaved from the precursor; that stretch reads QKSSEL. The 225-residue stretch at 25–249 folds into the Peptidase S1 domain; sequence VVGGDECNIN…YNDWIQSIIA (225 aa). 6 cysteine pairs are disulfide-bonded: C31-C163, C50-C66, C98-C256, C142-C210, C174-C189, and C200-C225. N44 is a glycosylation site (N-linked (GlcNAc...) asparagine). Residues H65 and D110 each act as charge relay system in the active site. The Charge relay system role is filled by S204.

Belongs to the peptidase S1 family. Snake venom subfamily. In terms of assembly, monomer. Expressed by the venom gland.

It localises to the secreted. In terms of biological role, snake venom serine protease that may act in the hemostasis system of the prey. In Crotalus adamanteus (Eastern diamondback rattlesnake), this protein is Snake venom serine proteinase 5.